The chain runs to 302 residues: Dihydroorotate dehydrogenase B (NAD(+)), catalytic subunit (302 aa).

Residues S20 and 44 to 45 (KG) each bind FMN. Substrate contacts are provided by residues K44 and 68–72 (NSVGL). Positions 98 and 125 each coordinate FMN. A substrate-binding site is contributed by N125. Catalysis depends on C128, which acts as the Nucleophile. FMN-binding residues include K163 and I189. Residue 190–191 (NT) participates in substrate binding. FMN contacts are provided by residues G215, 241–242 (GG), and 263–264 (GT).

Belongs to the dihydroorotate dehydrogenase family. Type 1 subfamily. In terms of assembly, heterotetramer of 2 PyrK and 2 PyrD type B subunits. It depends on FMN as a cofactor.

It is found in the cytoplasm. The enzyme catalyses (S)-dihydroorotate + NAD(+) = orotate + NADH + H(+). It functions in the pathway pyrimidine metabolism; UMP biosynthesis via de novo pathway; orotate from (S)-dihydroorotate (NAD(+) route): step 1/1. Catalyzes the conversion of dihydroorotate to orotate with NAD(+) as electron acceptor. In Thermoanaerobacter pseudethanolicus (strain ATCC 33223 / 39E) (Clostridium thermohydrosulfuricum), this protein is Dihydroorotate dehydrogenase B (NAD(+)), catalytic subunit (pyrD).